The chain runs to 926 residues: Serine/threonine-protein kinase pakE (926 aa).

A compositionally biased stretch (polar residues) spans 36–55 (SSRELPTQDSSTKTSNITTP). Disordered stretches follow at residues 36–257 (SSRE…RPKL) and 546–576 (QLNN…TTTT). The span at 56-107 (NNNNNNNNNNNNNNNNNNNNNNNNNNNNNNNNNNNNNNNNNNNNNNNNNNNN) shows a compositional bias: low complexity. Residues 108–117 (TPTSLNSSWK) are compositionally biased toward polar residues. Over residues 134-173 (NNNNNVGSPNNQSTSQTNHQQPPPQQLQQQQSLSSTSTPS) the composition is skewed to low complexity. Over residues 183–204 (RRNVTSPNLTRSDPTVPITNSR) the composition is skewed to polar residues. Over residues 215–253 (PQFQLNNLNFDDNNDHSTTTTNNNNNNNNNNSNNNNNNN) the composition is skewed to low complexity. The stretch at 534–567 (LDFEKELKENQQQLNNNNNNNNNNNNNNNNNNNN) forms a coiled coil. The Protein kinase domain maps to 650-903 (FEFKEKLGQG…VIDLLSHDFI (254 aa)). ATP-binding positions include 656 to 664 (LGQGGYGAV) and lysine 679. Residue aspartate 771 is the Proton acceptor of the active site.

This sequence belongs to the protein kinase superfamily. STE Ser/Thr protein kinase family. STE20 subfamily. Requires Mg(2+) as cofactor.

The enzyme catalyses L-seryl-[protein] + ATP = O-phospho-L-seryl-[protein] + ADP + H(+). The catalysed reaction is L-threonyl-[protein] + ATP = O-phospho-L-threonyl-[protein] + ADP + H(+). Functionally, may play a role in responding to changes in chemoattractant levels. This is Serine/threonine-protein kinase pakE from Dictyostelium discoideum (Social amoeba).